The following is a 453-amino-acid chain: Nuclear distribution protein PAC1-2 (453 aa).

Residues 9–41 enclose the LisH domain; that stretch reads QADELHKSIVAYLTANNLSTTAATLREELSLGE. A coiled-coil region spans residues 63 to 87; it reads VVRLQKKVMDLESRSVALQSELEHS. The interval 84-108 is disordered; that stretch reads LEHSTPASLSKRKDPTSWLPRSPPR. 7 WD repeats span residues 113 to 154, 156 to 196, 200 to 243, 246 to 285, 290 to 350, 352 to 391, and 396 to 448; these read SHQA…RTLK, HTRA…KNTR, GHDH…CIKT, GHTG…PESK, GHEN…IKTL, GHDN…RCVK, and AHGQ…DKVV.

Belongs to the WD repeat LIS1/nudF family. As to quaternary structure, self-associates. Interacts with NDL1 and dynein.

It localises to the cytoplasm. Its subcellular location is the cytoskeleton. The protein resides in the spindle pole. Positively regulates the activity of the minus-end directed microtubule motor protein dynein. May enhance dynein-mediated microtubule sliding by targeting dynein to the microtubule plus end. Required for nuclear migration during vegetative growth as well as development. Required for retrograde early endosome (EE) transport from the hyphal tip. Required for localization of dynein to the mitotic spindle poles. Recruits additional proteins to the dynein complex at SPBs. This Chaetomium globosum (strain ATCC 6205 / CBS 148.51 / DSM 1962 / NBRC 6347 / NRRL 1970) (Soil fungus) protein is Nuclear distribution protein PAC1-2.